A 235-amino-acid chain; its full sequence is Eukaryotic translation initiation factor 4E-1 (235 aa).

Positions 1-36 (MVVEETIKATSTEDLSNTIANQNPRGRGGDEDEELE) are disordered. Positions 8 to 24 (KATSTEDLSNTIANQNP) are enriched in polar residues. 2 EIF4G-binding regions span residues 60 to 63 (HPLE) and 70 to 106 (FDNP…NNIH). MRNA is bound by residues 78 to 83 (KQATWG), Lys-110, and 128 to 129 (WE). Cysteines 133 and 171 form a disulfide. An EIF4G-binding region spans residues 154-163 (YTLLAMIGEQ). Residues 178–183 (RSGQDK) and 223–227 (KKFDR) each bind mRNA.

The protein belongs to the eukaryotic initiation factor 4E family. As to quaternary structure, EIF4F is a multi-subunit complex, the composition of which varies with external and internal environmental conditions. It is composed of at least EIF4A, EIF4E and EIF4G. EIF4E is also known to interact with other partners. In higher plants two isoforms of EIF4F have been identified, named isoform EIF4F and isoform EIF(iso)4F. Isoform EIF4F has subunits p220 and p26, whereas isoform EIF(iso)4F has subunits p82 and p28. (Microbial infection) Interacts with potyvirus viral genome-linked protein (VPg); this interaction is possible in susceptible hosts but impaired in resistant plants. In terms of processing, according to the redox status, the Cys-133-Cys-171 disulfide bridge may have a role in regulating protein function by affecting its ability to bind capped mRNA.

Its subcellular location is the nucleus. The protein localises to the cytoplasm. Functionally, component of the protein complex eIF4F, which is involved in the recognition of the mRNA cap, ATP-dependent unwinding of 5'-terminal secondary structure and recruitment of mRNA to the ribosome. Recognizes and binds the 7-methylguanosine-containing mRNA cap during an early step in the initiation of protein synthesis and facilitates ribosome binding by inducing the unwinding of the mRNAs secondary structures. Key component of recessive resistance to potyviruses. In terms of biological role, (Microbial infection) Susceptibility host factor required for viral infection by recruiting viral RNAs to the host ribosomal complex via an interaction with viral genome-linked protein (VPg). This chain is Eukaryotic translation initiation factor 4E-1, found in Citrullus lanatus (Watermelon).